The sequence spans 100 residues: Urease subunit gamma (100 aa).

Belongs to the urease gamma subunit family. As to quaternary structure, heterotrimer of UreA (gamma), UreB (beta) and UreC (alpha) subunits. Three heterotrimers associate to form the active enzyme.

Its subcellular location is the cytoplasm. The catalysed reaction is urea + 2 H2O + H(+) = hydrogencarbonate + 2 NH4(+). The protein operates within nitrogen metabolism; urea degradation; CO(2) and NH(3) from urea (urease route): step 1/1. This Ralstonia nicotianae (strain ATCC BAA-1114 / GMI1000) (Ralstonia solanacearum) protein is Urease subunit gamma.